The sequence spans 103 residues: FRNVESKSCCPNTTGRNIYNTCRLGGGSRERCASLSGCKIISASTCPSDYPKFYCTLGCQSSKCASITTPPNSEVDAEAVRCKAACSNLCDFGVTTNQEIQDD.

The signal sequence occupies residues 1 to 6 (FRNVES). Cystine bridges form between cysteine 9/cysteine 46, cysteine 10/cysteine 38, and cysteine 22/cysteine 32. The propeptide at 53–103 (FYCTLGCQSSKCASITTPPNSEVDAEAVRCKAACSNLCDFGVTTNQEIQDD) is acidic domain.

It belongs to the plant thionin (TC 1.C.44) family.

The protein resides in the secreted. Functionally, thionins are small plant proteins which are toxic to animal cells. They seem to exert their toxic effect at the level of the cell membrane. Their precise function is not known. This chain is Viscotoxin-B (THI2.2), found in Viscum album (European mistletoe).